The primary structure comprises 88 residues: Small ribosomal subunit protein bS20 (88 aa).

The protein belongs to the bacterial ribosomal protein bS20 family.

Functionally, binds directly to 16S ribosomal RNA. This is Small ribosomal subunit protein bS20 from Clostridium novyi (strain NT).